Here is a 519-residue protein sequence, read N- to C-terminus: 3-octaprenyl-4-hydroxybenzoate carboxy-lyase (519 aa).

Asparagine 177 lines the Mn(2+) pocket. Residues 180 to 182 (IYR), 194 to 196 (RWL), and 199 to 200 (RG) each bind prenylated FMN. Residue glutamate 243 coordinates Mn(2+). Residue aspartate 318 is the Proton donor of the active site.

Belongs to the UbiD family. As to quaternary structure, homohexamer. Requires prenylated FMN as cofactor. Mn(2+) is required as a cofactor.

It is found in the cell membrane. The enzyme catalyses a 4-hydroxy-3-(all-trans-polyprenyl)benzoate + H(+) = a 2-(all-trans-polyprenyl)phenol + CO2. The protein operates within cofactor biosynthesis; ubiquinone biosynthesis. Functionally, catalyzes the decarboxylation of 3-octaprenyl-4-hydroxy benzoate to 2-octaprenylphenol, an intermediate step in ubiquinone biosynthesis. The polypeptide is 3-octaprenyl-4-hydroxybenzoate carboxy-lyase (Burkholderia pseudomallei (strain 1710b)).